Reading from the N-terminus, the 515-residue chain is SWI/SNF global transcription activator complex subunit snf59 (515 aa).

Residues 1 to 226 form a disordered region; the sequence is MEEEDITLEH…IHHVDSKNEE (226 aa). 5 stretches are compositionally biased toward basic and acidic residues: residues 7–37, 50–59, 73–85, 94–103, and 116–125; these read TLEH…DNSN, EEPKYHDNSN, EPEH…KEST, EEPKHHDNSN, and EEPKHHDSSN. A compositionally biased stretch (polar residues) spans 126–136; sequence KESTNLDNSNM. The segment covering 140-226 has biased composition (basic and acidic residues); sequence ENQKNFKIEE…IHHVDSKNEE (87 aa).

It belongs to the RSC7/SWP82 family. SWP82 subfamily. In terms of assembly, component of the SWI/SNF global transcription activator complex composed of at least arp9, arp42, snf5, snf22, snf30, snf59, sol1, ssr1, ssr2, ssr3, ssr4 and tfg3.

It is found in the nucleus. Functionally, component of the SWI/SNF complex, an ATP-dependent chromatin remodeling complex, which is required for the positive and negative regulation of gene expression of a large number of genes. It changes chromatin structure by altering DNA-histone contacts within a nucleosome, leading eventually to a change in nucleosome position, thus facilitating or repressing binding of gene-specific transcription factors. The sequence is that of SWI/SNF global transcription activator complex subunit snf59 (snf59) from Schizosaccharomyces pombe (strain 972 / ATCC 24843) (Fission yeast).